The chain runs to 463 residues: Annexin A7 (463 aa).

Residues 1 to 18 are compositionally biased toward pro residues; the sequence is MSYPGYPPTGYPPFPGYP. Disordered regions lie at residues 1 to 34 and 77 to 149; these read MSYPGYPPTGYPPFPGYPPAGQESSFPTAGQYPY and SPGG…MTQG. A repeat-rich region region spans residues 1–143; sequence MSYPGYPPTG…GGQAPYPSQP (143 aa). A 3 X 5 AA tandem repeats of G-Y-P-P-X region spans residues 5-20; the sequence is GYPPTGYPPFPGYPPA. Residues 86–99 are compositionally biased toward gly residues; that stretch reads GGQGFGAPPGGAGF. Annexin repeat units follow at residues 160–231, 232–303, 315–387, and 391–462; these read FDAM…ALFM, PSTY…SMCQ, QMAQ…TILQ, and NRPA…AIVG. An N6-acetyllysine modification is found at Lys208.

Belongs to the annexin family. Interacts with PDCD6.

Its function is as follows. Calcium/phospholipid-binding protein which promotes membrane fusion and is involved in exocytosis. The protein is Annexin A7 (Anxa7) of Mus musculus (Mouse).